A 441-amino-acid chain; its full sequence is N-succinylarginine dihydrolase (441 aa).

Residues 19–28 (AGLSFGNEAS), Asn-110, and 137–138 (HR) each bind substrate. The active site involves Glu-174. Substrate is bound at residue Arg-212. Residue His-248 is part of the active site. The substrate site is built by Asp-250 and Asn-359. Catalysis depends on Cys-365, which acts as the Nucleophile.

Belongs to the succinylarginine dihydrolase family. As to quaternary structure, homodimer.

The enzyme catalyses N(2)-succinyl-L-arginine + 2 H2O + 2 H(+) = N(2)-succinyl-L-ornithine + 2 NH4(+) + CO2. It participates in amino-acid degradation; L-arginine degradation via AST pathway; L-glutamate and succinate from L-arginine: step 2/5. Functionally, catalyzes the hydrolysis of N(2)-succinylarginine into N(2)-succinylornithine, ammonia and CO(2). In Cronobacter sakazakii (strain ATCC BAA-894) (Enterobacter sakazakii), this protein is N-succinylarginine dihydrolase.